A 512-amino-acid chain; its full sequence is MGIQAAEISAILKEQIKNFGQEAEVAEVGRVLSVGDGIARVHGLDNVQAGEMVEFPGGIRGMALNLEIDNVGVVIFGSDRDIKEGDIVKRTKSIVDVPVGDALLGRVVDGLGNPLDGKGPIETTERSIADVKAPGIIPRKSVHEPMATGLKSVDAMIPIGRGQRELIIGDRQTGKTAVALDTILNQKAYNDAAGDDESKKLYCVYVAVGQKRSTVAQLVKKLEETGAIEYSIVVAATASDPAPMQFLAPYAATSMAEFFRDNGRHALIIYDDLSKQAVSYRQMSLLLRRPPGREAYPGDVFYLHSRLLERSAKLGDDHGNGSLTALPIIETQGGDVSAFIPTNVISITDGQIFLETELFYQGIRPAVNTGLSVSRVGSSAQTNAMKSVAGPVKLELAQYREMAAFAQFGSDLDAATQQLLNRGARLTELMKQPQYSPLTNAEIVCVIFAGTKGYLDKIPVGDVGRYEKGLLAHLRGKHKGLLDYITKEDPKIKGEAEDKIRAALDEFAATFA.

Position 169–176 (169–176 (GDRQTGKT)) interacts with ATP.

Belongs to the ATPase alpha/beta chains family. F-type ATPases have 2 components, CF(1) - the catalytic core - and CF(0) - the membrane proton channel. CF(1) has five subunits: alpha(3), beta(3), gamma(1), delta(1), epsilon(1). CF(0) has four main subunits: a(1), b(1), b'(1) and c(9-12).

The protein resides in the cell inner membrane. It catalyses the reaction ATP + H2O + 4 H(+)(in) = ADP + phosphate + 5 H(+)(out). In terms of biological role, produces ATP from ADP in the presence of a proton gradient across the membrane. The alpha chain is a regulatory subunit. This Dinoroseobacter shibae (strain DSM 16493 / NCIMB 14021 / DFL 12) protein is ATP synthase subunit alpha 2.